A 459-amino-acid chain; its full sequence is Transcriptional coactivator YAP1 (459 aa).

4 positions are modified to phosphoserine; by LATS1 and LATS2: serine 21, serine 69, serine 87, and serine 119. Disordered regions lie at residues 51 to 88 and 103 to 129; these read LPDSFFKPPEPKSHSRQASTDAGSGGVLTPHHVRAHSS and SGMASAGASPQHLRQSSYEIPDDVPLP. WW domains are found at residues 126-159 and 186-219; these read VPLPPGWEMAKTSSGQRYFLNHIDQTTTWQDPRK and GPLPEGWEQAITPEGEIYYINHKNKTTSWLDPRL. Disordered regions lie at residues 231–254 and 307–364; these read TQSAPVKQGGPLPPNPHGGVMGGN and PTSM…SSYS. Residues 247-459 are transactivation domain; it reads HGGVMGGNNQ…IDKESFLTWL (213 aa). 2 stretches are compositionally biased toward polar residues: residues 307 to 347 and 355 to 364; these read PTSM…SGTY and DSGLSMSSYS.

Belongs to the YAP1 family. In terms of processing, phosphorylated by lats1 and lats2; leading to cytoplasmic translocation and inactivation. As to expression, ubiquitously expressed throughout development.

Its subcellular location is the cytoplasm. The protein resides in the nucleus. It is found in the cell junction. It localises to the tight junction. The protein localises to the cell membrane. Its function is as follows. Transcriptional regulator which can act both as a coactivator and a corepressor and is the critical downstream regulatory target in the Hippo signaling pathway that plays a pivotal role in organ size control and tumor suppression by restricting proliferation and promoting apoptosis. Plays a key role in tissue tension and 3D tissue shape by regulating cortical actomyosin network formation. This Oryzias latipes (Japanese rice fish) protein is Transcriptional coactivator YAP1.